A 515-amino-acid chain; its full sequence is ATP synthase subunit alpha (515 aa).

Residue 171–178 (GDRQTGKT) participates in ATP binding.

It belongs to the ATPase alpha/beta chains family. As to quaternary structure, F-type ATPases have 2 components, CF(1) - the catalytic core - and CF(0) - the membrane proton channel. CF(1) has five subunits: alpha(3), beta(3), gamma(1), delta(1), epsilon(1). CF(0) has three main subunits: a(1), b(2) and c(9-12). The alpha and beta chains form an alternating ring which encloses part of the gamma chain. CF(1) is attached to CF(0) by a central stalk formed by the gamma and epsilon chains, while a peripheral stalk is formed by the delta and b chains.

The protein localises to the cell inner membrane. It carries out the reaction ATP + H2O + 4 H(+)(in) = ADP + phosphate + 5 H(+)(out). In terms of biological role, produces ATP from ADP in the presence of a proton gradient across the membrane. The alpha chain is a regulatory subunit. This chain is ATP synthase subunit alpha, found in Xanthomonas oryzae pv. oryzae (strain MAFF 311018).